The sequence spans 340 residues: Glyceraldehyde-3-phosphate dehydrogenase 2 (340 aa).

Residues 12-13, Arg78, and Thr120 each bind NADP(+); that span reads RI. D-glyceraldehyde 3-phosphate contacts are provided by residues 151–153 and Thr182; that span reads SCT. The active-site Nucleophile is the Cys152. An NADP(+)-binding site is contributed by Asn183. D-glyceraldehyde 3-phosphate contacts are provided by residues Arg197, 210–211, and Arg233; that span reads TG. An NADP(+)-binding site is contributed by Asn315.

This sequence belongs to the glyceraldehyde-3-phosphate dehydrogenase family. As to quaternary structure, homotetramer. Interacts with BrxC. In response to oxidative stress, the active site Cys likely reacts with bacillithiol (BSH) to form mixed disulfides to protect the Cys residue against overoxidation. S-bacillithiolation presumably leads to loss of catalytic activity. Debacillithiolation by monothiol bacilliredoxin BrxC restores the activity.

It localises to the cytoplasm. It carries out the reaction D-glyceraldehyde 3-phosphate + phosphate + NADP(+) = (2R)-3-phospho-glyceroyl phosphate + NADPH + H(+). The enzyme catalyses D-glyceraldehyde 3-phosphate + phosphate + NAD(+) = (2R)-3-phospho-glyceroyl phosphate + NADH + H(+). Its pathway is carbohydrate biosynthesis; gluconeogenesis. In terms of biological role, involved in the gluconeogenesis. Catalyzes the oxidative phosphorylation of glyceraldehyde 3-phosphate (G3P) to 1,3-bisphosphoglycerate (BPG) using the cofactor NADP. The first reaction step involves the formation of a hemiacetal intermediate between G3P and a cysteine residue, and this hemiacetal intermediate is then oxidized to a thioester, with concomitant reduction of NADP to NADPH. The reduced NADPH is then exchanged with the second NADP, and the thioester is attacked by a nucleophilic inorganic phosphate to produce BPG. The polypeptide is Glyceraldehyde-3-phosphate dehydrogenase 2 (Bacillus subtilis (strain 168)).